The primary structure comprises 165 residues: Small ribosomal subunit protein uS5 (165 aa).

The S5 DRBM domain occupies 13 to 76 (LEEKVLVVNR…EAAKKNLMKI (64 aa)).

It belongs to the universal ribosomal protein uS5 family. Part of the 30S ribosomal subunit. Contacts proteins S4 and S8.

Its function is as follows. With S4 and S12 plays an important role in translational accuracy. Located at the back of the 30S subunit body where it stabilizes the conformation of the head with respect to the body. The protein is Small ribosomal subunit protein uS5 of Chlamydia pneumoniae (Chlamydophila pneumoniae).